The chain runs to 141 residues: Endoribonuclease YbeY (141 aa).

Positions 105, 109, and 115 each coordinate Zn(2+).

The protein belongs to the endoribonuclease YbeY family. Zn(2+) is required as a cofactor.

The protein localises to the cytoplasm. In terms of biological role, single strand-specific metallo-endoribonuclease involved in late-stage 70S ribosome quality control and in maturation of the 3' terminus of the 16S rRNA. The chain is Endoribonuclease YbeY from Chlorobaculum parvum (strain DSM 263 / NCIMB 8327) (Chlorobium vibrioforme subsp. thiosulfatophilum).